A 194-amino-acid polypeptide reads, in one-letter code: MFLTAVNPQPLSTPSWQIETKYSTKVLTGNWMEERRKFTRDTDKTPQSIYRKEYIPFPDHRPDQISRWYGKRKVEGLPYKHLITHHQEPPHRYLISTYDDHYNRHGYNPGLPPLRTWNGQKLLWLPEKSDFPLLAPPTNYGLYEQLKQRQLTPKAGLKQSTYTSSYPRPPLCAMSWREHAVPVPPHRLHPLPHF.

Mn regions lie at residues 45–60 and 95–107; these read TPQS…FPDH and ISTY…RHGY.

In terms of assembly, microtubule inner protein component of sperm flagellar doublet microtubules. As to expression, expressed in airway epithelial cells.

The protein resides in the cytoplasm. Its subcellular location is the cytoskeleton. It is found in the cilium axoneme. The protein localises to the flagellum axoneme. Its function is as follows. Microtubule inner protein (MIP) part of the dynein-decorated doublet microtubules (DMTs) in cilia axoneme, which is required for motile cilia beating. The sequence is that of Cilia- and flagella-associated protein 107 from Homo sapiens (Human).